Consider the following 94-residue polypeptide: Co-chaperonin GroES (94 aa).

Belongs to the GroES chaperonin family. As to quaternary structure, heptamer of 7 subunits arranged in a ring. Interacts with the chaperonin GroEL.

The protein resides in the cytoplasm. Functionally, together with the chaperonin GroEL, plays an essential role in assisting protein folding. The GroEL-GroES system forms a nano-cage that allows encapsulation of the non-native substrate proteins and provides a physical environment optimized to promote and accelerate protein folding. GroES binds to the apical surface of the GroEL ring, thereby capping the opening of the GroEL channel. The polypeptide is Co-chaperonin GroES (Desulfitobacterium hafniense (strain DSM 10664 / DCB-2)).